A 209-amino-acid polypeptide reads, in one-letter code: Orotate phosphoribosyltransferase (209 aa).

Residues Arg-96, Lys-100, His-102, and 122 to 130 (EDLISTGGS) each bind 5-phospho-alpha-D-ribose 1-diphosphate. Ser-126 serves as a coordination point for orotate.

Belongs to the purine/pyrimidine phosphoribosyltransferase family. PyrE subfamily. In terms of assembly, homodimer. Requires Mg(2+) as cofactor.

It catalyses the reaction orotidine 5'-phosphate + diphosphate = orotate + 5-phospho-alpha-D-ribose 1-diphosphate. It functions in the pathway pyrimidine metabolism; UMP biosynthesis via de novo pathway; UMP from orotate: step 1/2. Catalyzes the transfer of a ribosyl phosphate group from 5-phosphoribose 1-diphosphate to orotate, leading to the formation of orotidine monophosphate (OMP). This is Orotate phosphoribosyltransferase from Cytophaga hutchinsonii (strain ATCC 33406 / DSM 1761 / CIP 103989 / NBRC 15051 / NCIMB 9469 / D465).